Reading from the N-terminus, the 179-residue chain is Small ribosomal subunit protein uS5c (179 aa).

In terms of domain architecture, S5 DRBM spans 26–89 (FVERLIKISR…TDGRKNLIDV (64 aa)).

It belongs to the universal ribosomal protein uS5 family. Part of the 30S ribosomal subunit. Contacts protein S4.

Its subcellular location is the plastid. The protein resides in the chloroplast. With S4 and S12 plays an important role in translational accuracy. This chain is Small ribosomal subunit protein uS5c (rps5), found in Thalassiosira pseudonana (Marine diatom).